Here is a 275-residue protein sequence, read N- to C-terminus: Large ribosomal subunit protein uL2 (275 aa).

Over residues 28–38 the composition is skewed to basic and acidic residues; the sequence is EPYAPLLDKKS. 2 disordered regions span residues 28–55 and 224–258; these read EPYA…RHVG and AMNP…GYKT.

The protein belongs to the universal ribosomal protein uL2 family. In terms of assembly, part of the 50S ribosomal subunit. Forms a bridge to the 30S subunit in the 70S ribosome.

Functionally, one of the primary rRNA binding proteins. Required for association of the 30S and 50S subunits to form the 70S ribosome, for tRNA binding and peptide bond formation. It has been suggested to have peptidyltransferase activity; this is somewhat controversial. Makes several contacts with the 16S rRNA in the 70S ribosome. The protein is Large ribosomal subunit protein uL2 of Cellvibrio japonicus (strain Ueda107) (Pseudomonas fluorescens subsp. cellulosa).